The sequence spans 251 residues: 4-hydroxy-tetrahydrodipicolinate reductase (251 aa).

Residues 8–13, 76–78, and 106–109 each bind NAD(+); these read GAKGRM, GTT, and APNF. Histidine 136 serves as the catalytic Proton donor/acceptor. Histidine 137 provides a ligand contact to (S)-2,3,4,5-tetrahydrodipicolinate. The Proton donor role is filled by lysine 140. 146–147 is a (S)-2,3,4,5-tetrahydrodipicolinate binding site; sequence GT.

Belongs to the DapB family.

It is found in the cytoplasm. The catalysed reaction is (S)-2,3,4,5-tetrahydrodipicolinate + NAD(+) + H2O = (2S,4S)-4-hydroxy-2,3,4,5-tetrahydrodipicolinate + NADH + H(+). The enzyme catalyses (S)-2,3,4,5-tetrahydrodipicolinate + NADP(+) + H2O = (2S,4S)-4-hydroxy-2,3,4,5-tetrahydrodipicolinate + NADPH + H(+). Its pathway is amino-acid biosynthesis; L-lysine biosynthesis via DAP pathway; (S)-tetrahydrodipicolinate from L-aspartate: step 4/4. Catalyzes the conversion of 4-hydroxy-tetrahydrodipicolinate (HTPA) to tetrahydrodipicolinate. The polypeptide is 4-hydroxy-tetrahydrodipicolinate reductase (Bifidobacterium longum subsp. infantis (strain ATCC 15697 / DSM 20088 / JCM 1222 / NCTC 11817 / S12)).